Reading from the N-terminus, the 436-residue chain is Histone acetyltransferase type B subunit 2 (436 aa).

Acidic residues predominate over residues 1–19 (MEPYDDGFIEEQEEQEEER). The disordered stretch occupies residues 1–22 (MEPYDDGFIEEQEEQEEERTEE). WD repeat units follow at residues 136–176 (DHKG…SLPT), 187–227 (GHTK…KGNK), 237–277 (HHSS…TTRA), 284–324 (QHRD…TKLH), and 328–368 (CHTD…EEQT). The interval 370-374 (DDAQD) is interaction with the histone H4 N-terminus. The stretch at 385 to 425 (GHTNRISDFSWNLNDPWVLCSAAEDNLLQVWKVADAIVGKD) is one WD 6 repeat.

It belongs to the WD repeat RBAP46/RBAP48/MSI1 family. In terms of assembly, component of the HAT-B complex composed of at least hat1 and hat2. The HAT-B complex binds to histone H4 tail.

The protein localises to the cytoplasm. It localises to the nucleus. Functionally, regulatory subunit of the histone acetylase B (HAT-B) complex. The complex acetylates 'Lys-12' of histone H4 which is required for telomeric silencing. The polypeptide is Histone acetyltransferase type B subunit 2 (hat2) (Aspergillus oryzae (strain ATCC 42149 / RIB 40) (Yellow koji mold)).